The primary structure comprises 405 residues: Serine-type anaerobic sulfatase-maturating enzyme (405 aa).

The Radical SAM core domain maps to Pro-18–Arg-249. Cys-35 and Cys-39 together coordinate [4Fe-4S] cluster. Tyr-41 is an S-adenosyl-L-methionine binding site. A [4Fe-4S] cluster-binding site is contributed by Cys-42. S-adenosyl-L-methionine-binding residues include Gly-84, Ser-140, and Arg-152. [4Fe-4S] cluster is bound by residues Cys-270, Cys-276, and Cys-291. The active-site Proton acceptor is Asp-292. Residues Cys-331, Cys-334, Cys-340, Cys-344, and Cys-357 each coordinate [4Fe-4S] cluster.

The protein belongs to the radical SAM superfamily. Anaerobic sulfatase-maturating enzyme family. As to quaternary structure, monomer. Interacts with AtsA prior to its export to the periplasm. Requires [4Fe-4S] cluster as cofactor.

The protein resides in the cytoplasm. It catalyses the reaction L-seryl-[sulfatase] + S-adenosyl-L-methionine = 3-oxo-L-alanyl-[sulfatase] + 5'-deoxyadenosine + L-methionine + H(+). It participates in protein modification; sulfatase oxidation. Its function is as follows. Involved in 'Ser-type' sulfatase maturation under anaerobic conditions. Catalyzes the post-translational modification of serine ('Ser-72' in the arylsulfatase AtsA) into 3-oxoalanine (also known as C(alpha)-formylglycine (FGly)), by a free radical chemical mechanism initiated via the reductive cleavage of S-adenosyl-L-methionine (SAM). The polypeptide is Serine-type anaerobic sulfatase-maturating enzyme (Klebsiella aerogenes (Enterobacter aerogenes)).